The primary structure comprises 316 residues: Porphobilinogen deaminase (316 aa).

An S-(dipyrrolylmethanemethyl)cysteine modification is found at cysteine 245.

Belongs to the HMBS family. As to quaternary structure, monomer. The cofactor is dipyrromethane.

It carries out the reaction 4 porphobilinogen + H2O = hydroxymethylbilane + 4 NH4(+). It participates in porphyrin-containing compound metabolism; protoporphyrin-IX biosynthesis; coproporphyrinogen-III from 5-aminolevulinate: step 2/4. It functions in the pathway porphyrin-containing compound metabolism; chlorophyll biosynthesis. In terms of biological role, tetrapolymerization of the monopyrrole PBG into the hydroxymethylbilane pre-uroporphyrinogen in several discrete steps. This is Porphobilinogen deaminase from Synechococcus sp. (strain CC9311).